The sequence spans 255 residues: uncharacterized protein (255 aa).

Residues 1-10 (MSDSIHRRKV) are compositionally biased toward basic residues. The segment at 1 to 78 (MSDSIHRRKV…SPMRGLPMEE (78 aa)) is disordered. A compositionally biased stretch (basic and acidic residues) spans 44 to 61 (VFERSFSEPSLNRHRDGQ).

This is an uncharacterized protein from Arabidopsis thaliana (Mouse-ear cress).